We begin with the raw amino-acid sequence, 434 residues long: Probable tRNA pseudouridine synthase D (434 aa).

Residue D93 is the Nucleophile of the active site. In terms of domain architecture, TRUD spans 169 to 396 (GTPNYFGQQR…SAGSRRAILL (228 aa)).

The protein belongs to the pseudouridine synthase TruD family.

It carries out the reaction uridine(13) in tRNA = pseudouridine(13) in tRNA. Could be responsible for synthesis of pseudouridine from uracil-13 in transfer RNAs. This chain is Probable tRNA pseudouridine synthase D, found in Halobacterium salinarum (strain ATCC 29341 / DSM 671 / R1).